Reading from the N-terminus, the 22-residue chain is Lantibiotic mutacin B-Ny266 (22 aa).

Positions 3–7 form a cross-link, lanthionine (Ser-Cys); it reads SWSFC. At S5 the chain carries 2,3-didehydroalanine (Ser). Residues 8-11 constitute a cross-link (beta-methyllanthionine (Thr-Cys)); it reads TPGC. T14 carries the post-translational modification 2,3-didehydrobutyrine. Residues 16-21 constitute a cross-link (lanthionine (Ser-Cys)); sequence SFNSYC. Residues 19–22 constitute a cross-link (S-(2-aminovinyl)-D-cysteine (Ser-Cys)); it reads SYCC.

Post-translationally, maturation of lantibiotics involves the enzymatic conversion of Thr, and Ser into dehydrated AA and the formation of thioether bonds with cysteine. The C-terminal lanthionine undergoes decarboxylation. This is followed by membrane translocation and cleavage of the modified precursor. In terms of processing, it is not established whether the 2,3-didehydrobutyrine is the E- or Z-isomer.

Functionally, lanthionine-containing peptide antibiotic (lantibiotic) active on Gram-positive bacteria. The bactericidal activity of lantibiotics is based on depolarization of energized bacterial cytoplasmic membranes, initiated by the formation of aqueous transmembrane pores. This is Lantibiotic mutacin B-Ny266 from Streptococcus mutans.